We begin with the raw amino-acid sequence, 258 residues long: Cytochrome P450 1A2 (258 aa).

The protein belongs to the cytochrome P450 family. Requires heme as cofactor.

Its subcellular location is the endoplasmic reticulum membrane. The protein localises to the microsome membrane. The enzyme catalyses an organic molecule + reduced [NADPH--hemoprotein reductase] + O2 = an alcohol + oxidized [NADPH--hemoprotein reductase] + H2O + H(+). Its function is as follows. Cytochromes P450 are a group of heme-thiolate monooxygenases. In liver microsomes, this enzyme is involved in an NADPH-dependent electron transport pathway. It oxidizes a variety of structurally unrelated compounds, including steroids, fatty acids, and xenobiotics. This is Cytochrome P450 1A2 (CYP1A2) from Gallus gallus (Chicken).